The chain runs to 185 residues: Ribosome-recycling factor (185 aa).

Belongs to the RRF family.

The protein localises to the cytoplasm. In terms of biological role, responsible for the release of ribosomes from messenger RNA at the termination of protein biosynthesis. May increase the efficiency of translation by recycling ribosomes from one round of translation to another. In Saccharophagus degradans (strain 2-40 / ATCC 43961 / DSM 17024), this protein is Ribosome-recycling factor.